The primary structure comprises 56 residues: Putative zinc-binding protein YnfU (56 aa).

Cys-19, Cys-22, Cys-41, and Cys-44 together coordinate Zn(2+).

It depends on Zn(2+) as a cofactor.

The chain is Putative zinc-binding protein YnfU from Escherichia coli (strain K12).